A 506-amino-acid chain; its full sequence is Heat stress transcription factor A-1 (506 aa).

Residues 157–207 are a coiled coil; it reads MEEEIEMLKRDKNVLMQELVRLRQQQQTTDHQLQTLGKRLQGMEQRQQQMM. The tract at residues 164–214 is hydrophobic repeat HR-A/B; it reads LKRDKNVLMQELVRLRQQQQTTDHQLQTLGKRLQGMEQRQQQMMSFLAKAM. The tract at residues 231–254 is disordered; the sequence is RRRIVASNKKRRLPKQDGSLDSES. A compositionally biased stretch (basic residues) spans 232–243; sequence RRIVASNKKRRL. Positions 239-242 match the Nuclear localization signal motif; it reads KKRR. Residues 449 to 456 carry the AHA motif; sequence DSFWEQFL.

The protein belongs to the HSF family. Class A subfamily. As to quaternary structure, homotrimer. Exhibits temperature-dependent phosphorylation.

It localises to the nucleus. Functionally, transcriptional regulator that specifically binds DNA of heat shock promoter elements (HSE). The polypeptide is Heat stress transcription factor A-1 (HSFA1) (Oryza sativa subsp. japonica (Rice)).